A 315-amino-acid chain; its full sequence is Methionyl-tRNA formyltransferase (315 aa).

Residue 113-116 participates in (6S)-5,6,7,8-tetrahydrofolate binding; sequence SLLP.

Belongs to the Fmt family.

The catalysed reaction is L-methionyl-tRNA(fMet) + (6R)-10-formyltetrahydrofolate = N-formyl-L-methionyl-tRNA(fMet) + (6S)-5,6,7,8-tetrahydrofolate + H(+). In terms of biological role, attaches a formyl group to the free amino group of methionyl-tRNA(fMet). The formyl group appears to play a dual role in the initiator identity of N-formylmethionyl-tRNA by promoting its recognition by IF2 and preventing the misappropriation of this tRNA by the elongation apparatus. The chain is Methionyl-tRNA formyltransferase from Shigella boydii serotype 18 (strain CDC 3083-94 / BS512).